We begin with the raw amino-acid sequence, 833 residues long: MSFYNHKEIEPKWQGYWAEHHTFKTGTDASKPKFYALDMFPYPSGAGLHVGHPEGYTATDILSRYKRAQGYNVLHPMGWDAFGLPAEQYAMDTGNDPAEFTAENIANFKRQINALGFSYDWDREVNTTDPNYYKWTQWIFTKLYEKGLAYEAEVPVNWVEELGTAIANEEVLPDGTSERGGYPVVRKPMRQWMLKITAYAERLLNDLDELDWSESIKDMQRNWIGKSTGANVTFKVKGTDKEFTVFTTRPDTLFGATFTVLAPEHELVDAITSSEQAEAVADYKHQASLKSDLVRTDLAKEKTGVWTGAYAINPVNGKEMPIWIADYVLASYGTGAVMAVPAHDQRDWEFAKQFDLPIVEVLEGGNVEEAAYTEDGLHVNSDFLDGLNKEDAIAKIVAYLEEKGCGQEKVTYRLRDWLFSRQRYWGEPIPIIHWEDGTSTAVPETELPLVLPVTKDIRPSGTGESPLANLTDWLEVTREDGVKGRRETNTMPQWAGSSWYYLRYIDPHNTEKLADEDLLKQWLPVDIYVGGAEHAVLHLLYARFWHKFLYDLGVVPTKEPFQKLFNQGMILGTSYRDHRGALVTTDKVEKRDGSFFHVETGEELEQAPAKMSKSLKNVVNPDDVVEQYGADTLRVYEMFMGPLDASIAWSEEGLEGSRKFLDRVYRLITSKEILAENNGALDKAYNETVKAVTEQIESLKFNTAIAQLMVFVNAANKEDKLYIDYAKGFIQLIAPFAPHLAEELWQTVAETGESISYVAWPTWDESKLVEDEIEIVVQIKGKVRAKLMVAKDLSREELQEIALADEKVKAEIDGKEIVKVISVPNKLVNIVVK.

Residues 41-52 (PYPSGAGLHVGH) carry the 'HIGH' region motif. Positions 610–614 (KMSKS) match the 'KMSKS' region motif. An ATP-binding site is contributed by lysine 613.

The protein belongs to the class-I aminoacyl-tRNA synthetase family.

The protein localises to the cytoplasm. It carries out the reaction tRNA(Leu) + L-leucine + ATP = L-leucyl-tRNA(Leu) + AMP + diphosphate. This chain is Leucine--tRNA ligase, found in Streptococcus pneumoniae (strain Taiwan19F-14).